An 86-amino-acid polypeptide reads, in one-letter code: Large ribosomal subunit protein bL27 (86 aa).

The protein belongs to the bacterial ribosomal protein bL27 family.

This chain is Large ribosomal subunit protein bL27, found in Xanthomonas campestris pv. campestris (strain 8004).